A 54-amino-acid chain; its full sequence is 2-aminomuconate deaminase (54 aa).

In terms of assembly, homohexamer.

It carries out the reaction (2Z,4E)-2-aminomuconate + H2O = (3E)-2-oxohex-3-enedioate + NH4(+). Its pathway is xenobiotic degradation; nitrobenzene degradation. Its function is as follows. Converts 2-aminomuconate to 4-oxalocrotonate, an intermediate step in the biodegradation of nitrobenzene. The protein is 2-aminomuconate deaminase of Ectopseudomonas oleovorans (Pseudomonas oleovorans).